Consider the following 378-residue polypeptide: Dihydroorotate dehydrogenase (quinone) (378 aa).

Residues 79–83 and threonine 103 each bind FMN; that span reads PGYDK. A substrate-binding site is contributed by lysine 83. Substrate is bound at residue 128–132; that stretch reads NRMGF. Residues asparagine 160 and asparagine 193 each contribute to the FMN site. A substrate-binding site is contributed by asparagine 193. Residue serine 196 is the Nucleophile of the active site. Asparagine 198 lines the substrate pocket. FMN-binding residues include lysine 231 and threonine 259. 260–261 is a binding site for substrate; the sequence is NT. FMN-binding positions include glycine 289, glycine 318, and 339–340; that span reads YT.

It belongs to the dihydroorotate dehydrogenase family. Type 2 subfamily. As to quaternary structure, monomer. FMN serves as cofactor.

It localises to the cell membrane. The enzyme catalyses (S)-dihydroorotate + a quinone = orotate + a quinol. It participates in pyrimidine metabolism; UMP biosynthesis via de novo pathway; orotate from (S)-dihydroorotate (quinone route): step 1/1. Functionally, catalyzes the conversion of dihydroorotate to orotate with quinone as electron acceptor. The protein is Dihydroorotate dehydrogenase (quinone) of Trichodesmium erythraeum (strain IMS101).